The chain runs to 286 residues: Bifunctional protein FolD (286 aa).

NADP(+) is bound by residues 165-167 (GRS) and Ser190.

This sequence belongs to the tetrahydrofolate dehydrogenase/cyclohydrolase family. Homodimer.

The enzyme catalyses (6R)-5,10-methylene-5,6,7,8-tetrahydrofolate + NADP(+) = (6R)-5,10-methenyltetrahydrofolate + NADPH. It catalyses the reaction (6R)-5,10-methenyltetrahydrofolate + H2O = (6R)-10-formyltetrahydrofolate + H(+). It functions in the pathway one-carbon metabolism; tetrahydrofolate interconversion. Functionally, catalyzes the oxidation of 5,10-methylenetetrahydrofolate to 5,10-methenyltetrahydrofolate and then the hydrolysis of 5,10-methenyltetrahydrofolate to 10-formyltetrahydrofolate. The sequence is that of Bifunctional protein FolD from Paraburkholderia xenovorans (strain LB400).